The primary structure comprises 366 residues: Cobalt-precorrin-5B C(1)-methyltransferase (366 aa).

Belongs to the CbiD family.

The enzyme catalyses Co-precorrin-5B + S-adenosyl-L-methionine = Co-precorrin-6A + S-adenosyl-L-homocysteine. Its pathway is cofactor biosynthesis; adenosylcobalamin biosynthesis; cob(II)yrinate a,c-diamide from sirohydrochlorin (anaerobic route): step 6/10. Its function is as follows. Catalyzes the methylation of C-1 in cobalt-precorrin-5B to form cobalt-precorrin-6A. This Pseudomonas aeruginosa (strain LESB58) protein is Cobalt-precorrin-5B C(1)-methyltransferase.